A 513-amino-acid chain; its full sequence is Lysine--tRNA ligase (513 aa).

2 residues coordinate Mg(2+): E423 and E430.

This sequence belongs to the class-II aminoacyl-tRNA synthetase family. Homodimer. It depends on Mg(2+) as a cofactor.

The protein localises to the cytoplasm. The catalysed reaction is tRNA(Lys) + L-lysine + ATP = L-lysyl-tRNA(Lys) + AMP + diphosphate. The protein is Lysine--tRNA ligase of Anaeromyxobacter dehalogenans (strain 2CP-1 / ATCC BAA-258).